Reading from the N-terminus, the 197-residue chain is Probable chorismate pyruvate-lyase (197 aa).

Substrate is bound by residues Arg77, Leu115, and Glu176.

It belongs to the UbiC family.

Its subcellular location is the cytoplasm. It catalyses the reaction chorismate = 4-hydroxybenzoate + pyruvate. It participates in cofactor biosynthesis; ubiquinone biosynthesis. Functionally, removes the pyruvyl group from chorismate, with concomitant aromatization of the ring, to provide 4-hydroxybenzoate (4HB) for the ubiquinone pathway. The polypeptide is Probable chorismate pyruvate-lyase (Burkholderia ambifaria (strain ATCC BAA-244 / DSM 16087 / CCUG 44356 / LMG 19182 / AMMD) (Burkholderia cepacia (strain AMMD))).